A 91-amino-acid polypeptide reads, in one-letter code: Cytochrome b-c1 complex subunit 6, mitochondrial (91 aa).

The N-terminal 13 residues, 1 to 13 (MGLEDEQKMLTES), are a transit peptide targeting the mitochondrion. The disordered stretch occupies residues 1–30 (MGLEDEQKMLTESGDPEEEEEEEEELVDPL). Residues 14–27 (GDPEEEEEEEEELV) are compositionally biased toward acidic residues. Cystine bridges form between Cys-37–Cys-81 and Cys-53–Cys-67. Lys-42 is subject to N6-acetyllysine. At Lys-85 the chain carries N6-acetyllysine.

The protein belongs to the UQCRH/QCR6 family. As to quaternary structure, component of the ubiquinol-cytochrome c oxidoreductase (cytochrome b-c1 complex, complex III, CIII), a multisubunit enzyme composed of 11 subunits. The complex is composed of 3 respiratory subunits cytochrome b, cytochrome c1 and Rieske protein UQCRFS1, 2 core protein subunits UQCRC1/QCR1 and UQCRC2/QCR2, and 6 low-molecular weight protein subunits UQCRH/QCR6, UQCRB/QCR7, UQCRQ/QCR8, UQCR10/QCR9, UQCR11/QCR10 and subunit 9, the cleavage product of Rieske protein UQCRFS1. The complex exists as an obligatory dimer and forms supercomplexes (SCs) in the inner mitochondrial membrane with NADH-ubiquinone oxidoreductase (complex I, CI) and cytochrome c oxidase (complex IV, CIV), resulting in different assemblies (supercomplex SCI(1)III(2)IV(1) and megacomplex MCI(2)III(2)IV(2)).

Its subcellular location is the mitochondrion inner membrane. Component of the ubiquinol-cytochrome c oxidoreductase, a multisubunit transmembrane complex that is part of the mitochondrial electron transport chain which drives oxidative phosphorylation. The respiratory chain contains 3 multisubunit complexes succinate dehydrogenase (complex II, CII), ubiquinol-cytochrome c oxidoreductase (cytochrome b-c1 complex, complex III, CIII) and cytochrome c oxidase (complex IV, CIV), that cooperate to transfer electrons derived from NADH and succinate to molecular oxygen, creating an electrochemical gradient over the inner membrane that drives transmembrane transport and the ATP synthase. The cytochrome b-c1 complex catalyzes electron transfer from ubiquinol to cytochrome c, linking this redox reaction to translocation of protons across the mitochondrial inner membrane, with protons being carried across the membrane as hydrogens on the quinol. In the process called Q cycle, 2 protons are consumed from the matrix, 4 protons are released into the intermembrane space and 2 electrons are passed to cytochrome c. The chain is Cytochrome b-c1 complex subunit 6, mitochondrial (UQCRH) from Homo sapiens (Human).